Here is a 250-residue protein sequence, read N- to C-terminus: Manganese transport system ATP-binding protein MntB (250 aa).

One can recognise an ABC transporter domain in the interval 5–236 (VKVDNLSVFY…MVAKTYQGNL (232 aa)). An ATP-binding site is contributed by 37–44 (GPNGAGKS).

Belongs to the ABC transporter superfamily.

The protein resides in the cell membrane. Functionally, this protein is probably a component of a manganese permease, a binding protein-dependent, ATP-driven transport system. Probably responsible for energy coupling to the transport system. This is Manganese transport system ATP-binding protein MntB (mntB) from Halalkalibacterium halodurans (strain ATCC BAA-125 / DSM 18197 / FERM 7344 / JCM 9153 / C-125) (Bacillus halodurans).